The following is a 509-amino-acid chain: Ceramide glucosyltransferase (509 aa).

Over 1–42 the chain is Lumenal; that stretch reads MIMQLGLTSLAFLALKCDAYNIAPKIDTPNVEPFAPSGGLKL. Residues 43–63 traverse the membrane as a helical segment; the sequence is LAIVAIIWYVVVLLVAYYGFF. At 64–384 the chain is on the cytoplasmic side; sequence EIMQKFSKRK…EATLLEPTTE (321 aa). Position 123 (Asp-123) is a short sequence motif, D1. Asp-179 is a short sequence motif (D2). Asp-321 is a short sequence motif (D3). Asp-321 serves as the catalytic Proton acceptor. A (Q/R)XXRW motif is present at residues 361 to 365; sequence RRIRW. A helical membrane pass occupies residues 385-405; that stretch reads CLLCGTFGTFAISTLFLQSYF. Over 406–408 the chain is Lumenal; it reads NWK. Residues 409-429 form a helical membrane-spanning segment; the sequence is FFIFHLLVWMVTDYTQFHILL. The Cytoplasmic segment spans residues 430–466; that stretch reads TNASQDTATCNVPYFAEPNFNAYGSPFESSNLRTFHR. Residues 467–487 traverse the membrane as a helical segment; it reads WVLYWLLREVLALPIWISAML. At 488–509 the chain is on the lumenal side; the sequence is GTRIIWRNRPFRINVDLSAEEL.

This sequence belongs to the glycosyltransferase 2 family.

It is found in the golgi apparatus membrane. It carries out the reaction an N-acylsphing-4-enine + UDP-alpha-D-glucose = a beta-D-glucosyl-(1&lt;-&gt;1')-N-acylsphing-4-enine + UDP + H(+). The protein operates within lipid metabolism; sphingolipid metabolism. Catalyzes the final step in the biosynthesis of the membrane lipid glucosylceramide (GluCer), the transfer of glucose to ceramide. Glucosylceramides play important roles in growth, differentiation and pathogenicity. The sequence is that of Ceramide glucosyltransferase from Komagataella phaffii (strain GS115 / ATCC 20864) (Yeast).